Reading from the N-terminus, the 270-residue chain is Replication protein A 32 kDa subunit (270 aa).

The residue at position 1 (methionine 1) is an N-acetylmethionine. Phosphoserine; by PRKDC is present on residues serine 4 and serine 8. Phosphothreonine; by PRKDC is present on threonine 21. A disordered region spans residues 21-40; it reads TQSPGGFGSPAPSQAEKKSR. Serine 23 is subject to Phosphoserine; by CDK2. The residue at position 29 (serine 29) is a Phosphoserine; by CDK1. A Phosphoserine; by PRKDC modification is found at serine 33. Glycyl lysine isopeptide (Lys-Gly) (interchain with G-Cter in ubiquitin) cross-links involve residues lysine 37 and lysine 38. The OB DNA-binding region spans 74–148; it reads VTIVGIIRHA…KSLVAFKIMP (75 aa). An interaction with RAD52, TIPIN, UNG and XPA region spans residues 187–270; it reads GMSEAGNFGG…DDHFKSTDAE (84 aa).

Belongs to the replication factor A protein 2 family. As to quaternary structure, component of the replication protein A complex (RPA/RP-A), a heterotrimeric complex composed of RPA1, RPA2 and RPA3. Interacts with PRPF19; the PRP19-CDC5L complex is recruited to the sites of DNA repair where it ubiquitinates the replication protein A complex (RPA). Interacts with SERTAD3. Interacts with TIPIN. Interacts with TIMELESS. Interacts with PPP4R2; the interaction is direct, DNA damage-dependent and mediates the recruitment of the PP4 catalytic subunit PPP4C. Interacts (hyperphosphorylated) with RAD51. Interacts with SMARCAL1; the interaction is direct and mediates the recruitment to the RPA complex of SMARCAL1. Interacts with RAD52 and XPA; those interactions are direct and associate RAD52 and XPA to the RPA complex. Interacts with FBH1. Interacts with ETAA1; the interaction is direct and promotes ETAA1 recruitment at stalled replication forks. Interacts with DDI2. Interacts (in unphosphorylated form via N-terminus) with EIF4EBP3; the interaction enhances EIF4EBP3-mediated inhibition of EIF4E-mediated mRNA nuclear export. Differentially phosphorylated throughout the cell cycle, becoming phosphorylated at the G1-S transition and dephosphorylated in late mitosis. Mainly phosphorylated at Ser-23 and Ser-29, by cyclin A-CDK2 and cyclin B-CDK1, respectively during DNA replication and mitosis. Dephosphorylation may require the serine/threonine-protein phosphatase 4. Phosphorylation at Ser-23 and Ser-29 is a prerequisite for further phosphorylation. Becomes hyperphosphorylated on additional residues including Ser-4, Ser-8, Thr-21 and Ser-33 in response to DNA damage. Hyperphosphorylation is mediated by ATM, ATR and PRKDC. Primarily recruited to DNA repair nuclear foci as a hypophosphorylated form it undergoes subsequent hyperphosphorylation, catalyzed by ATR. Hyperphosphorylation is required for RAD51 recruitment to chromatin and efficient DNA repair. Phosphorylation at Thr-21 depends upon RFWD3 presence. In terms of processing, DNA damage-induced 'Lys-63'-linked polyubiquitination by PRPF19 mediates ATRIP recruitment to the RPA complex at sites of DNA damage and activation of ATR. Ubiquitinated by RFWD3 at stalled replication forks in response to DNA damage: ubiquitination by RFWD3 does not lead to degradation by the proteasome and promotes removal of the RPA complex from stalled replication forks, promoting homologous recombination.

Its subcellular location is the nucleus. The protein resides in the PML body. As part of the heterotrimeric replication protein A complex (RPA/RP-A), binds and stabilizes single-stranded DNA intermediates, that form during DNA replication or upon DNA stress. It prevents their reannealing and in parallel, recruits and activates different proteins and complexes involved in DNA metabolism. Thereby, it plays an essential role both in DNA replication and the cellular response to DNA damage. In the cellular response to DNA damage, the RPA complex controls DNA repair and DNA damage checkpoint activation. Through recruitment of ATRIP activates the ATR kinase a master regulator of the DNA damage response. It is required for the recruitment of the DNA double-strand break repair factors RAD51 and RAD52 to chromatin in response to DNA damage. Also recruits to sites of DNA damage proteins like XPA and XPG that are involved in nucleotide excision repair and is required for this mechanism of DNA repair. Also plays a role in base excision repair (BER) probably through interaction with UNG. Also recruits SMARCAL1/HARP, which is involved in replication fork restart, to sites of DNA damage. May also play a role in telomere maintenance. This chain is Replication protein A 32 kDa subunit (RPA2), found in Pongo abelii (Sumatran orangutan).